A 225-amino-acid chain; its full sequence is Ribonuclease 3 (225 aa).

Positions Leu-5 to Gly-127 constitute an RNase III domain. Glu-40 contributes to the Mg(2+) binding site. Residue Asp-44 is part of the active site. Residues Asp-113 and Glu-116 each contribute to the Mg(2+) site. Glu-116 is a catalytic residue. Positions Asp-154–Lys-224 constitute a DRBM domain.

It belongs to the ribonuclease III family. Homodimer. Mg(2+) serves as cofactor.

The protein resides in the cytoplasm. The enzyme catalyses Endonucleolytic cleavage to 5'-phosphomonoester.. Its function is as follows. Digests double-stranded RNA. Involved in the processing of primary rRNA transcript to yield the immediate precursors to the large and small rRNAs (23S and 16S). Processes some mRNAs, and tRNAs when they are encoded in the rRNA operon. Processes pre-crRNA and tracrRNA of type II CRISPR loci if present in the organism. This chain is Ribonuclease 3, found in Aromatoleum aromaticum (strain DSM 19018 / LMG 30748 / EbN1) (Azoarcus sp. (strain EbN1)).